We begin with the raw amino-acid sequence, 345 residues long: MFTTHPQGRSYRSSVPHHHLRQPEIQNSYDQHANNPPRQTRRRPLADMIGHPIHFLTGQFAGQTIRAELDEIQKADLGRKYARVDRRPLDPPPVVRLRYFDIREDDVDQERGTEIKNYDEIQTIGLMSTVDLFPVPNESWTSRSPTQTSFSSSSPTLSNGNENFMFSSPQTSSPTAAQSQASTPNSPSSNDIIHYVGNHAITESSKVTSSLVGATFVQPAIVDYEGKKTIIFVFSDLAVKIEGTFLLRYRVFDIYSRPRDREDLLVQAECYGGPFRVYSTKEFPGLQASTDLTKHLARWGVRLNIRETERKRRKKGEIGSPLDDPKSKRKRTSLGSEDDEASDED.

2 stretches are compositionally biased toward polar residues: residues 1-13 (MFTT…SYRS) and 24-38 (EIQN…NPPR). Disordered regions lie at residues 1–43 (MFTT…TRRR), 138–189 (ESWT…SPSS), and 310–345 (RKRR…SDED). Residues 62–306 (GQTIRAELDE…ARWGVRLNIR (245 aa)) enclose the Velvet domain. 2 stretches are compositionally biased toward low complexity: residues 141 to 158 (TSRS…PTLS) and 167 to 184 (SSPQ…ASTP). A compositionally biased stretch (acidic residues) spans 336-345 (SEDDEASDED).

Belongs to the velvet family.

It localises to the nucleus. Velvet-domain-containing protein that probably acts as a positive regulator of sexual development. The protein is Probable velvet family sexual development regulator LACBIDRAFT_317102 of Laccaria bicolor (strain S238N-H82 / ATCC MYA-4686) (Bicoloured deceiver).